An 80-amino-acid polypeptide reads, in one-letter code: uncharacterized protein (80 aa).

2 helical membrane-spanning segments follow: residues 15–35 (ALGLTLLYLAVWLVAAYLSGV) and 45–65 (WFEMACILTPLLFIGLCWAMV).

It to H.influenzae HI_0974B.

The protein localises to the cell membrane. This is an uncharacterized protein from Escherichia coli (strain K12).